The chain runs to 207 residues: Antitermination protein Q (207 aa).

The disordered stretch occupies residues 1–28 (MRLESVAKFHSPKSPMMSDSPRATASDS). 4 residues coordinate Zn(2+): cysteine 118, cysteine 121, cysteine 144, and cysteine 147. The segment at 118–147 (CRNCHGTGRAVDIAKTEQWGRVVEKECGRC) is a zinc-finger region. Residues 171–192 (LTQPTWSRTVKPLYDALVVQCH) mediate DNA binding.

Belongs to the phage antitermination Q type 2 family. In terms of assembly, interacts with host RPOB (via flap domain); this interaction renders host RNAP resistant to transcription pausing and allows it to read through termination signals. Interacts with host RNA polymerase sigma factor RPOD (via domain-4). Interacts with host NusA (via N-terminus and AR2 domain); this interaction releases the autoinhibition of NusA.

Its function is as follows. Mediates the switch from middle to viral late gene expression by associating with host RNA polymerase (RNAP) so that the latter can read without pausing and through transcription terminators preceding late genes. Competes with host factor sigma 70 for binding to RPOB, the beta-subunit of host RNAP. To join the elongation complex, binds a specific DNA Q-binding element (QBE) and interacts with RNAP that is paused during early elongation. Participates in the lysis-lysogeny decision by activating the expression of the late lytic genes. The protein is Antitermination protein Q (23) of Salmonella typhimurium.